Consider the following 832-residue polypeptide: Disintegrin and metalloproteinase domain-containing protein 23 (832 aa).

Over residues 1–10 (MKPPGSSSRQ) the composition is skewed to polar residues. The tract at residues 1–37 (MKPPGSSSRQPPLAGCSLAGASCGPQRGPAGSVPASA) is disordered. The signal sequence occupies residues 1–59 (MKPPGSSSRQPPLAGCSLAGASCGPQRGPAGSVPASAPARTPPCRLLLVLLLLPPLAAS). Over residues 28-37 (GPAGSVPASA) the composition is skewed to low complexity. Residues 60–286 (SRPRAWGAAA…ELQWLKRRKR (227 aa)) constitute a propeptide that is removed on maturation. 4 N-linked (GlcNAc...) asparagine glycosylation sites follow: Asn76, Asn96, Asn100, and Asn263. Residues 287–792 (AVNPSRGIFE…EGPKGPSATN (506 aa)) lie on the Extracellular side of the membrane. Residues 299–496 (KYLELMIVND…GGGACLFNRP (198 aa)) form the Peptidase M12B domain. Disulfide bonds link Cys408–Cys491, Cys450–Cys475, and Cys452–Cys459. A Disintegrin domain is found at 502–588 (PTECGNGYVE…QCPPNLHKQD (87 aa)). Asn547 and Asn548 each carry an N-linked (GlcNAc...) asparagine glycan. The cysteines at positions 560 and 580 are disulfide-linked. The interval 563–568 (AVNECD) is may bind the integrin receptor. N-linked (GlcNAc...) asparagine glycans are attached at residues Asn664 and Asn732. The 38-residue stretch at 732–769 (NMSSCPLDSKGKVCSGHGVCSNEATCICDFTWAGTDCS) folds into the EGF-like domain. Cystine bridges form between Cys736-Cys751, Cys745-Cys757, and Cys759-Cys768. A helical membrane pass occupies residues 793 to 813 (LIIGSIAGAILVAAIVLGGTG). The Cytoplasmic portion of the chain corresponds to 814-832 (WGFKNVKKRRFDPTQQGPI).

In terms of assembly, can bind to LGI1 and LGI4. Ligand for integrin alpha-V/beta-3. In terms of tissue distribution, highly expressed in the brain and weakly expressed in the heart. In the brain, expressed prominently in the amygdala, caudate nucleus, hypothalamus, thalamus, cerebral cortex and occipital pole.

Its subcellular location is the cell membrane. The protein localises to the secreted. Its function is as follows. May play a role in cell-cell and cell-matrix interactions. This is a non-catalytic metalloprotease-like protein. The sequence is that of Disintegrin and metalloproteinase domain-containing protein 23 (ADAM23) from Homo sapiens (Human).